We begin with the raw amino-acid sequence, 625 residues long: Chaperone protein HtpG (625 aa).

The interval 1-330 (MAKQVQNFNA…SSDLSLNVSR (330 aa)) is a; substrate-binding. The tract at residues 331–545 (ELLQQDRQVT…SADPSAHMQK (215 aa)) is b. Positions 546–625 (LMAQMGKEYA…MVQAADSTKH (80 aa)) are c.

Belongs to the heat shock protein 90 family. In terms of assembly, homodimer.

It localises to the cytoplasm. Molecular chaperone. Has ATPase activity. This is Chaperone protein HtpG from Bdellovibrio bacteriovorus (strain ATCC 15356 / DSM 50701 / NCIMB 9529 / HD100).